Here is a 526-residue protein sequence, read N- to C-terminus: Beta,beta-carotene 15,15'-dioxygenase (526 aa).

Fe cation is bound by residues H172, H236, H307, and H512.

This sequence belongs to the carotenoid oxygenase family. Requires Fe(2+) as cofactor.

It is found in the cytoplasm. Its subcellular location is the cytosol. It carries out the reaction all-trans-beta-carotene + O2 = 2 all-trans-retinal. Its pathway is cofactor metabolism; retinol metabolism. Symmetrically cleaves beta-carotene into two molecules of retinal using a dioxygenase mechanism. The sequence is that of Beta,beta-carotene 15,15'-dioxygenase from Gallus gallus (Chicken).